Here is a 399-residue protein sequence, read N- to C-terminus: Elongation factor Tu (399 aa).

The tr-type G domain occupies 10-209 (KPHVNIGTIG…EVDAYIPTPV (200 aa)). The G1 stretch occupies residues 19 to 26 (GHVDHGKT). 19–26 (GHVDHGKT) is a GTP binding site. Threonine 26 is a Mg(2+) binding site. The segment at 60–64 (GITIA) is G2. A G3 region spans residues 81–84 (DCPG). Residues 81-85 (DCPGH) and 136-139 (NKQD) contribute to the GTP site. Residues 136-139 (NKQD) form a G4 region. A G5 region spans residues 174-176 (SAL).

It belongs to the TRAFAC class translation factor GTPase superfamily. Classic translation factor GTPase family. EF-Tu/EF-1A subfamily. As to quaternary structure, monomer.

It is found in the cytoplasm. It catalyses the reaction GTP + H2O = GDP + phosphate + H(+). Its function is as follows. GTP hydrolase that promotes the GTP-dependent binding of aminoacyl-tRNA to the A-site of ribosomes during protein biosynthesis. The protein is Elongation factor Tu of Helicobacter acinonychis (strain Sheeba).